Reading from the N-terminus, the 213-residue chain is Orotate phosphoribosyltransferase (213 aa).

Lysine 26 contacts 5-phospho-alpha-D-ribose 1-diphosphate. 34–35 (FF) contacts orotate. 5-phospho-alpha-D-ribose 1-diphosphate-binding positions include 72–73 (YK), arginine 98, lysine 99, lysine 102, histidine 104, and 123–131 (DDVISAGTS). Orotate-binding residues include serine 127 and arginine 155.

This sequence belongs to the purine/pyrimidine phosphoribosyltransferase family. PyrE subfamily. Homodimer. It depends on Mg(2+) as a cofactor.

It carries out the reaction orotidine 5'-phosphate + diphosphate = orotate + 5-phospho-alpha-D-ribose 1-diphosphate. It participates in pyrimidine metabolism; UMP biosynthesis via de novo pathway; UMP from orotate: step 1/2. In terms of biological role, catalyzes the transfer of a ribosyl phosphate group from 5-phosphoribose 1-diphosphate to orotate, leading to the formation of orotidine monophosphate (OMP). The polypeptide is Orotate phosphoribosyltransferase (Neisseria meningitidis serogroup C (strain 053442)).